A 65-amino-acid chain; its full sequence is Neurotoxin BmK AGAP-SYPU2 (65 aa).

The 63-residue stretch at Lys-2–Asn-64 folds into the LCN-type CS-alpha/beta domain. 4 disulfides stabilise this stretch: Cys-12–Cys-63, Cys-16–Cys-36, Cys-22–Cys-46, and Cys-26–Cys-48.

Expressed by the venom gland.

Its subcellular location is the secreted. In terms of biological role, alpha toxins bind voltage-independently at site-3 of sodium channels and inhibit the inactivation of the activated channels, thereby blocking neuronal transmission. In vivo, shows analgesic activity (ED(50) is 1.42 mg/kg) and antitumor activity against Ehrlich ascites tumor and S-180 fibrosarcoma models. The protein is Neurotoxin BmK AGAP-SYPU2 of Olivierus martensii (Manchurian scorpion).